Consider the following 599-residue polypeptide: MTELSKIRNFSIVAHIDHGKSTLADRLIQSTGTVQDRDMKEQLLDAMDIERERGITIKANTVRIDYEADDGERYVLNLIDTPGHVDFAYEVSRSMRAVEGSLLVVDSTQGVEAQTLANVYQAIDADHEIVPVLNKIDLPAADCDRVAEQIEDVIGIDATDAIRVSAKTGIGIKDTLEAIVKRLPAPTGERNAPLKAMLVDSWYDAYLGVIVLVRIMDGVLKKGDQIKMMQTNARYGVDRIGVFRPAMQVVDELGPGEIGFITASIKQVRDTKVGDTITHDKKGAETALPGFKPSVPVVFCGLFPVDSSEFEDLRDAIEKLALNDASFSYEMETSAALGFGFRCGFLGLLHLEVIRDRIEREYNIELITTAPSVVYHIFMKDGEMLELHNPADMPDLSKVDHLEEPRIKATILVPDEYLGDVLKLCQDRRGIQQDLSYAGSRAMVVYDLPLNEVVFDFYDRLKSVTKGYASFDYQMIGYRADNLVKMSVLVNDEPVDALSTMVHRDRAEQRGRAMCEKLKDLIPRHMFKIPIQAAIGGKVIARETLSALRKDVTAKCYGGDATRKRKLLEKQKAGKKKMRQFGRVEIPQEAFISALKMDD.

The tr-type G domain maps to 5-187; that stretch reads SKIRNFSIVA…AIVKRLPAPT (183 aa). GTP is bound by residues 17–22 and 134–137; these read DHGKST and NKID.

This sequence belongs to the TRAFAC class translation factor GTPase superfamily. Classic translation factor GTPase family. LepA subfamily.

It localises to the cell inner membrane. It carries out the reaction GTP + H2O = GDP + phosphate + H(+). Functionally, required for accurate and efficient protein synthesis under certain stress conditions. May act as a fidelity factor of the translation reaction, by catalyzing a one-codon backward translocation of tRNAs on improperly translocated ribosomes. Back-translocation proceeds from a post-translocation (POST) complex to a pre-translocation (PRE) complex, thus giving elongation factor G a second chance to translocate the tRNAs correctly. Binds to ribosomes in a GTP-dependent manner. The sequence is that of Elongation factor 4 from Ruegeria sp. (strain TM1040) (Silicibacter sp.).